The following is a 413-amino-acid chain: Tyrosine--tRNA ligase (413 aa).

Y34 serves as a coordination point for L-tyrosine. Positions 39–48 (PTSHSLTVGH) match the 'HIGH' region motif. 2 residues coordinate L-tyrosine: Y164 and Q168. The 'KMSKS' region motif lies at 225–229 (KFGKS). K228 contributes to the ATP binding site. Residues 347–413 (ILLVDALVQT…GKKNNALIVF (67 aa)) form the S4 RNA-binding domain.

It belongs to the class-I aminoacyl-tRNA synthetase family. TyrS type 1 subfamily. As to quaternary structure, homodimer.

It localises to the cytoplasm. The enzyme catalyses tRNA(Tyr) + L-tyrosine + ATP = L-tyrosyl-tRNA(Tyr) + AMP + diphosphate + H(+). Functionally, catalyzes the attachment of tyrosine to tRNA(Tyr) in a two-step reaction: tyrosine is first activated by ATP to form Tyr-AMP and then transferred to the acceptor end of tRNA(Tyr). The polypeptide is Tyrosine--tRNA ligase (Aster yellows witches'-broom phytoplasma (strain AYWB)).